The primary structure comprises 264 residues: uncharacterized protein (264 aa).

The segment at 235 to 264 is disordered; the sequence is ESSDEEDNDDDIINNDTNNDINNDDIEIKT. Residues 237–247 are compositionally biased toward acidic residues; that stretch reads SDEEDNDDDII.

This is an uncharacterized protein from Acanthamoeba polyphaga mimivirus (APMV).